We begin with the raw amino-acid sequence, 192 residues long: ADP-ribosylation factor-like protein 4C (192 aa).

Glycine 2 carries N-myristoyl glycine lipidation. GTP is bound by residues 20–27, 68–72, and 127–130; these read GLDSAGKT, DVGGQ, and NKQD.

It belongs to the small GTPase superfamily. Arf family. Interacts with CYTH2. Interacts with alpha tubulin; interaction is independent on the ARL4C GTP or GDP binding status. As to expression, expressed in several tumor cell lines (at protein level). Expressed in lung, brain, leukocytes and placenta.

The protein localises to the cell projection. It localises to the filopodium. The protein resides in the cell membrane. It is found in the cytoplasm. Small GTP-binding protein which cycles between an inactive GDP-bound and an active GTP-bound form, and the rate of cycling is regulated by guanine nucleotide exchange factors (GEF) and GTPase-activating proteins (GAP). GTP-binding protein that does not act as an allosteric activator of the cholera toxin catalytic subunit. May be involved in transport between a perinuclear compartment and the plasma membrane, apparently linked to the ABCA1-mediated cholesterol secretion pathway. Recruits CYTH1, CYTH2, CYTH3 and CYTH4 to the plasma membrane in the GDP-bound form. Regulates the microtubule-dependent intracellular vesicular transport from early endosome to recycling endosome process. This chain is ADP-ribosylation factor-like protein 4C (ARL4C), found in Homo sapiens (Human).